The chain runs to 369 residues: uncharacterized protein (369 aa).

Positions 1 to 35 are disordered; the sequence is MQTNNPSYFFRSESALQDEKRKEEKSHNPNGNPRN. A compositionally biased stretch (basic and acidic residues) spans 17-27; the sequence is QDEKRKEEKSH. WD repeat units follow at residues 83–127, 130–169, 174–213, 220–260, 263–301, and 304–341; these read GHSG…CVET, GHTDYVKCLLLLEEEGLLLSGSTDASLIVWDVSSQPSRLL, GHSRGIECITRQPNTDIFWTCGSESSIRCWHITKVGGSQL, GHQS…HEET, EHPDVCTDVLTLADGNIATACRDEEIRVWDTTTGNVKDI, and GHYESVTKILQWKSYLISSSLDQTIRVWDLEYSADNNE.

This is an uncharacterized protein from Schizosaccharomyces pombe (strain 972 / ATCC 24843) (Fission yeast).